Reading from the N-terminus, the 93-residue chain is UPF0298 protein LMHCC_0506 (93 aa).

Belongs to the UPF0298 family.

The protein resides in the cytoplasm. In Listeria monocytogenes serotype 4a (strain HCC23), this protein is UPF0298 protein LMHCC_0506.